Reading from the N-terminus, the 245-residue chain is Glucan endo-1,3-beta-glucosidase (245 aa).

The signal sequence occupies residues 1–23; that stretch reads MMKTLVVVLSLSLTILSFGGAHA. 8 disulfide bridges follow: C32–C244, C80–C90, C95–C102, C150–C233, C155–C216, C163–C179, C183–C192, and C193–C203.

This sequence belongs to the thaumatin family. As to expression, abundantly expressed in ripening fruit.

The protein resides in the secreted. It catalyses the reaction Hydrolysis of (1-&gt;3)-beta-D-glucosidic linkages in (1-&gt;3)-beta-D-glucans.. This is Glucan endo-1,3-beta-glucosidase from Prunus avium (Cherry).